Reading from the N-terminus, the 584-residue chain is MNTLLSVLANLFQQATANAFPDLSVLDPNFQPEITPSTQEKFGHYQFNSAMKLAKLLKKNPRQVAEAIVNQLTDSLPPLSKIEIAGPGFINMTFSTDFLSKNLDILLRDAHFGIPFPEKPEKIIIDFSSPNVAKEMHVGHLRSTVIGDSLARLFEFLGHHVIRLNHLGDWGTAFGMLIAYMKEEAPNVLSGEQKTDLTHLVSWYRSSKKKFDEEPEFKRRAQLEVVALQQGEQKAREAWQMICEISQKAYQEIYQLLDVKIIDRGESFYNPFLPNIVSDLEKKGLVKISDGAKCIFLEGFQNREGENLPLMIQKSDGGYNYDTTDMAAIYHRIYHEKGDRLIYITDAGQATHFQMIFKAAEKAKYLDTTQIRVDHVPFGLVLGTDGKKFRTRSGETEKLIDLLRTAINCADKILSEKNPEMEESERRHLAKSLGIGAIKYADLSCNRVGDYTFSYDRMLRFEGNTAAFLMYAYVRIAGIKRRLKANLPAVLENTHINLEHSTEIELGLHILRFHETLNLMANDLLPNRLTDYLYTLAEKFNAFFRDCRVEGTPQQNTRLLLCEATAKVLKQGLTILGLTTVDKM.

The short motif at 130–140 (PNVAKEMHVGH) is the 'HIGH' region element.

It belongs to the class-I aminoacyl-tRNA synthetase family. Monomer.

The protein resides in the cytoplasm. It catalyses the reaction tRNA(Arg) + L-arginine + ATP = L-arginyl-tRNA(Arg) + AMP + diphosphate. In Protochlamydia amoebophila (strain UWE25), this protein is Arginine--tRNA ligase.